Reading from the N-terminus, the 489-residue chain is Occludin (489 aa).

The Cytoplasmic segment spans residues 1–51 (MMYEKRSYTGYGHPSSHYDYPPPSGPPGSFYLADVPPQHFYQWRSPPGIVR). Residues 45–248 (SPPGIVRILQ…ICYFAQKTRH (204 aa)) enclose the MARVEL domain. The chain crosses the membrane as a helical span at residues 52 to 74 (ILQGSVVILCLVIFACVASTLAW). At 75 to 112 (EYYGSGGLLGYGGGLGSYYNGYYGGYNGYYYGGLTNPR) the chain is on the extracellular side. A helical membrane pass occupies residues 113 to 137 (AANGFMIAMAVLCFLVTLGLVIAGL). Residues 138 to 147 (SKASGARSRR) lie on the Cytoplasmic side of the membrane. The helical transmembrane segment at 148–172 (FYLLVAVLSGLLAFVMLIASIVYVV) threads the bilayer. Residues 173–222 (GVNPRAGLGASSGSLYYNQMLMLCNQMMSPVAGGIMNQYLYHYCMVDPQE) lie on the Extracellular side of the membrane. A disulfide bridge links C196 with C216. Residues 223-244 (AVAIVCGFLTVILLCVICYFAQ) traverse the membrane as a helical segment. Over 245–489 (KTRHKIWKYG…MVGGYDQSRS (245 aa)) the chain is Cytoplasmic. A Phosphoserine modification is found at S280. T285 bears the Phosphothreonine mark. S300 is modified (phosphoserine). A disordered region spans residues 308-382 (PAQENGYGHS…ESSGEQNRDD (75 aa)). Residues 322–332 (PSVPPPEGPSP) show a composition bias toward pro residues. Positions 345–354 (PARRGHRQRP) are enriched in basic residues. Y364 and Y368 each carry phosphotyrosine. Over residues 365-377 (ETDYTTAAESSGE) the composition is skewed to polar residues. 2 positions are modified to phosphothreonine; by PKC/PRKCH: T369 and T370. Position 374 is a phosphoserine (S374). An OCEL domain is found at 381 to 489 (DDWASLYPPI…MVGGYDQSRS (109 aa)). The stretch at 407-434 (LQRYKALCAEMDDIGTQLRQLSHELDCL) forms a coiled coil. Residue S457 is modified to Phosphoserine.

Belongs to the ELL/occludin family. As to quaternary structure, interacts with TJP1/ZO1. Interacts with VAPA. Interacts with CLDN1, CLDN6, CLDN9, CLDN11, CLDN12 and CLDN17. Interacts with PLSCR1. Interacts with LSR, ILDR1 and ILDR2. Interacts with TJP2/ZO2. In terms of processing, dephosphorylated by PTPRJ. Localized at tight junctions of both epithelial and endothelial cells.

Its subcellular location is the cell membrane. It localises to the cell junction. The protein resides in the tight junction. Functionally, may play a role in the formation and regulation of the tight junction (TJ) paracellular permeability barrier. This Potorous tridactylus (Potoroo) protein is Occludin (OCLN).